Here is a 554-residue protein sequence, read N- to C-terminus: Calcium/calmodulin-dependent protein kinase type II delta 2 chain (554 aa).

Residues 13 to 271 (YQLFEELGKG…AAEAPKHPWI (259 aa)) enclose the Protein kinase domain. Residues 19–27 (LGKGAFSVV) and lysine 42 each bind ATP. The active-site Proton acceptor is aspartate 135. At threonine 286 the chain carries Phosphothreonine. A phosphoserine mark is found at serine 314 and serine 318. Disordered regions lie at residues 324-375 (PDGV…TIED) and 392-413 (WQPS…SSVQ). Residues 330-340 (NNKTNLASSPK) are compositionally biased toward polar residues. Threonine 372 bears the Phosphothreonine mark.

It belongs to the protein kinase superfamily. CAMK Ser/Thr protein kinase family. CaMK subfamily. CAMK2 is composed of four different chains: alpha, beta, gamma, and delta. The different isoforms assemble into homo- or heteromultimeric holoenzymes composed of 8 to 12 subunits. As to expression, first detected at 18 hpf. At 24 hpf, expressed in discrete anterior locations and along either side of the midline. At 48 hpf, expression is predominantly in the forebrain, and then accumulates in the forebrain, hindbrain, and retinal epithelium at 72 hpf.

It carries out the reaction L-seryl-[protein] + ATP = O-phospho-L-seryl-[protein] + ADP + H(+). It catalyses the reaction L-threonyl-[protein] + ATP = O-phospho-L-threonyl-[protein] + ADP + H(+). Its activity is regulated as follows. Autophosphorylation of CAMK2 plays an important role in the regulation of the kinase activity. In terms of biological role, caM-kinase II (CAMK2) is a prominent kinase in the central nervous system. The sequence is that of Calcium/calmodulin-dependent protein kinase type II delta 2 chain (camk2d2) from Danio rerio (Zebrafish).